Here is a 478-residue protein sequence, read N- to C-terminus: Cytochrome c-552 (478 aa).

The first 26 residues, 1 to 26, serve as a signal peptide directing secretion; it reads MARKTLRARRFFSLIFPFFFITSVYA. Histidine 94 is a binding site for heme c. Cysteine 122, cysteine 125, and lysine 126 together coordinate heme. Cysteine 160, cysteine 163, histidine 164, cysteine 209, cysteine 212, and histidine 213 together coordinate heme c. Ca(2+)-binding residues include glutamate 215, tyrosine 216, lysine 261, and glutamine 263. Tyrosine 216 serves as a coordination point for substrate. Position 264 (histidine 264) interacts with substrate. 9 residues coordinate heme c: histidine 275, cysteine 282, cysteine 285, histidine 286, histidine 301, cysteine 314, cysteine 317, histidine 318, and histidine 393.

The protein belongs to the cytochrome c-552 family. Requires Ca(2+) as cofactor. Heme c serves as cofactor.

It localises to the periplasm. The catalysed reaction is 6 Fe(III)-[cytochrome c] + NH4(+) + 2 H2O = 6 Fe(II)-[cytochrome c] + nitrite + 8 H(+). The protein operates within nitrogen metabolism; nitrate reduction (assimilation). Functionally, catalyzes the reduction of nitrite to ammonia, consuming six electrons in the process. This is Cytochrome c-552 from Salmonella paratyphi A (strain ATCC 9150 / SARB42).